Consider the following 173-residue polypeptide: Lipoprotein signal peptidase (173 aa).

4 helical membrane-spanning segments follow: residues 7 to 27 (FFWF…LWVV), 41 to 61 (LWPG…FSLF), 70 to 90 (WLSL…PNFN), and 95 to 115 (AGYG…FVAG). Residues Asp-119 and Asp-135 contribute to the active site. The chain crosses the membrane as a helical span at residues 130-150 (IFNLADVFINIGIICLLIAAW).

This sequence belongs to the peptidase A8 family.

The protein localises to the cell inner membrane. It carries out the reaction Release of signal peptides from bacterial membrane prolipoproteins. Hydrolyzes -Xaa-Yaa-Zaa-|-(S,diacylglyceryl)Cys-, in which Xaa is hydrophobic (preferably Leu), and Yaa (Ala or Ser) and Zaa (Gly or Ala) have small, neutral side chains.. The protein operates within protein modification; lipoprotein biosynthesis (signal peptide cleavage). Its function is as follows. This protein specifically catalyzes the removal of signal peptides from prolipoproteins. The sequence is that of Lipoprotein signal peptidase from Cyanothece sp. (strain PCC 7425 / ATCC 29141).